The primary structure comprises 320 residues: tRNA uridine(34) hydroxylase (320 aa).

Residues 123–217 (EDENTVILDA…YGKDPETKGQ (95 aa)) form the Rhodanese domain. Cysteine 177 functions as the Cysteine persulfide intermediate in the catalytic mechanism.

It belongs to the TrhO family.

It carries out the reaction uridine(34) in tRNA + AH2 + O2 = 5-hydroxyuridine(34) in tRNA + A + H2O. Functionally, catalyzes oxygen-dependent 5-hydroxyuridine (ho5U) modification at position 34 in tRNAs. The protein is tRNA uridine(34) hydroxylase of Staphylococcus epidermidis (strain ATCC 12228 / FDA PCI 1200).